The primary structure comprises 308 residues: Putative mitochondrial transporter UCP3 (308 aa).

Topologically, residues 1-10 (MVGLKPPEVP) are mitochondrial intermembrane. A helical membrane pass occupies residues 11–32 (PTTAVKLLGAGTAACFADLLTF). 3 Solcar repeats span residues 11-102 (PTTA…VKQL), 111-202 (SSIT…IKEK), and 211-296 (DNLP…LKRA). At 33 to 73 (PLDTAKVRLQIQGENQAARSAQYRGVLGTILTMVRNEGPRS) the chain is on the mitochondrial matrix side. A helical membrane pass occupies residues 74-96 (PYNGLVAGLQRQMSFASIRIGLY). The Mitochondrial intermembrane portion of the chain corresponds to 97 to 116 (DSVKQLYTPKGSDHSSITTR). Residues 117-133 (ILAGCTTGAMAVTCAQP) form a helical membrane-spanning segment. Over 134-179 (TDVVKVRFQASIHAGPRSNRKYSGTMDAYRTIAREEGVRGLWKGIL) the chain is Mitochondrial matrix. A helical transmembrane segment spans residues 180–196 (PNITRNAIVNCAEMVTY). Residues 197–213 (DVIKEKVLDYHLLTDNL) lie on the Mitochondrial intermembrane side of the membrane. The helical transmembrane segment at 214–233 (PCHFVSAFGAGFCATVVASP) threads the bilayer. The Mitochondrial matrix segment spans residues 234–267 (VDVVKTRYMNSPPGQYQNPLDCMLKMVTQEGPTA). The chain crosses the membrane as a helical span at residues 268-290 (FYKGFTPSFLRLGSWNVVMFVSY). The interval 275–297 (SFLRLGSWNVVMFVSYEQLKRAL) is purine nucleotide binding. The Mitochondrial intermembrane portion of the chain corresponds to 291–308 (EQLKRALMKVQMLRESPF).

Belongs to the mitochondrial carrier (TC 2.A.29) family. In terms of assembly, interacts with HAX1; the interaction is direct and calcium-dependent.

It localises to the mitochondrion inner membrane. Functionally, putative transmembrane transporter that plays a role in mitochondrial metabolism via an as yet unclear mechanism. Originally, this mitochondrial protein was thought to act as a proton transmembrane transporter from the mitochondrial intermembrane space into the matrix, causing proton leaks through the inner mitochondrial membrane, thereby uncoupling mitochondrial membrane potential generation from ATP synthesis. However, this function is controversial and uncoupling may not be the function, or at least not the main function, but rather a consequence of more conventional metabolite transporter activity. This chain is Putative mitochondrial transporter UCP3, found in Sus scrofa (Pig).